The following is a 157-amino-acid chain: Protein Smg (157 aa).

Belongs to the Smg family.

This Buchnera aphidicola subsp. Acyrthosiphon pisum (strain 5A) protein is Protein Smg.